The primary structure comprises 88 residues: Small ribosomal subunit protein bS20 (88 aa).

It belongs to the bacterial ribosomal protein bS20 family.

Its function is as follows. Binds directly to 16S ribosomal RNA. This Rhodopseudomonas palustris (strain BisA53) protein is Small ribosomal subunit protein bS20.